We begin with the raw amino-acid sequence, 463 residues long: Chromosomal replication initiator protein DnaA (463 aa).

Residues 1–90 (MSLSLWQQCL…KPLSQIISQT (90 aa)) are domain I, interacts with DnaA modulators. The interval 91 to 126 (VTASVSAPSAPIVRVAAPSRPSWDNAAPQPELSYRS) is domain II. Residues 127–343 (NVNPKHTFDN…GALNRVIANA (217 aa)) form a domain III, AAA+ region region. Residues glycine 171, glycine 173, lysine 174, and threonine 175 each coordinate ATP. The tract at residues 344–463 (NFTGRAITID…FSNLIRTLSS (120 aa)) is domain IV, binds dsDNA.

The protein belongs to the DnaA family. In terms of assembly, oligomerizes as a right-handed, spiral filament on DNA at oriC.

It is found in the cytoplasm. In terms of biological role, plays an essential role in the initiation and regulation of chromosomal replication. ATP-DnaA binds to the origin of replication (oriC) to initiate formation of the DNA replication initiation complex once per cell cycle. Binds the DnaA box (a 9 base pair repeat at the origin) and separates the double-stranded (ds)DNA. Forms a right-handed helical filament on oriC DNA; dsDNA binds to the exterior of the filament while single-stranded (ss)DNA is stabiized in the filament's interior. The ATP-DnaA-oriC complex binds and stabilizes one strand of the AT-rich DNA unwinding element (DUE), permitting loading of DNA polymerase. After initiation quickly degrades to an ADP-DnaA complex that is not apt for DNA replication. Binds acidic phospholipids. The sequence is that of Chromosomal replication initiator protein DnaA from Serratia proteamaculans (strain 568).